The chain runs to 460 residues: T-box transcription factor TBX1 (460 aa).

Disordered stretches follow at residues L30 to F53 and G67 to K99. Positions G67–C84 are enriched in polar residues. The segment at residues L116–D294 is a DNA-binding region (T-box). 2 disordered regions span residues R317–H355 and P376–L400. Over residues N320–G330 the composition is skewed to polar residues. Basic and acidic residues predominate over residues T331–P344. The short motif at K418–I429 is the Nuclear localization signal element.

In terms of assembly, binds DNA as a dimer. In terms of tissue distribution, expressed in the ear and mesendodermal components of pharyngeal arches.

The protein resides in the nucleus. In terms of biological role, probable transcriptional regulator involved in developmental processes. Binds to the palindromic T site 5'-TTCACACCTAGGTGTGAA-3' DNA sequence. Is required for normal development of the pharyngeal arch arteries. Acts cell autonomously in the pharyngeal mesendoderm and influences the development of neural crest-derived cartilages secondarily. The sequence is that of T-box transcription factor TBX1 (tbx1) from Danio rerio (Zebrafish).